The chain runs to 362 residues: MDTNRKFTLVKSLSIGLGTFLVGSVFLTVNDEASASTKVDAPKVEQEAPAKADAPKVEQEAPAKADAPKVEQEAPAKVDAPKVEQEAPAKVDAPKVEQEAPAKADAPKVEQKRTFVREAAQSNHSASWLNNYKKGYGYGPYPLGINGGNHYGVDFFMNVGTPVRAISDGKIVEAGWTNYGGGNEIGLVENDGVHRQWYMHLSKFNVKVGDRVKAGQIIGWSGSTGYSTAPHLHFQRMTNSFSNNTAQDPMPFLKSAGYGSNSTSSSNNNGYKTNKYGTLYKSESASFTANTDIITRLTGPFRSMPQSGVLRKGLTIKYDEVMKQDGHVWVGYNTNSGKRVYLPVRTWNESTGELGPLWGTIK.

Residues Met1–Ala35 form the signal peptide. The interval Ala35 to Glu110 is disordered. The span at Asp40–Glu110 shows a compositional bias: basic and acidic residues. His150 and Asp154 together coordinate Zn(2+). His231 is a catalytic residue. Zn(2+) is bound at residue His233. One can recognise an SH3b domain in the interval Ser282–Ser350.

The protein belongs to the peptidase M23B family. The cofactor is Zn(2+).

The protein resides in the secreted. It catalyses the reaction Hydrolysis of the -Gly-|-Gly- bond in the pentaglycine inter-peptide link joining staphylococcal cell wall peptidoglycans.. Its function is as follows. Lyses staphylococcal cells by hydrolyzing the polyglycine interpeptide bridges of the peptidoglycan. This chain is Glycyl-glycine endopeptidase ALE-1, found in Staphylococcus capitis.